A 453-amino-acid chain; its full sequence is Histidine--tRNA ligase (453 aa).

This sequence belongs to the class-II aminoacyl-tRNA synthetase family. In terms of assembly, homodimer.

Its subcellular location is the cytoplasm. It catalyses the reaction tRNA(His) + L-histidine + ATP = L-histidyl-tRNA(His) + AMP + diphosphate + H(+). This chain is Histidine--tRNA ligase, found in Cytophaga hutchinsonii (strain ATCC 33406 / DSM 1761 / CIP 103989 / NBRC 15051 / NCIMB 9469 / D465).